A 385-amino-acid polypeptide reads, in one-letter code: Putative mitochondrial carrier protein TRV_02148.2 (385 aa).

Solcar repeat units follow at residues 24–124 and 130–210; these read SNTL…LHAR and RTAG…LRRR. 5 helical membrane-spanning segments follow: residues 30 to 47, 132 to 150, 184 to 207, 263 to 279, and 294 to 310; these read GTAI…DSIL, AGNE…KLFT, WSAY…YLAL, YTIC…LEVI, and VVTV…LYML.

This sequence belongs to the mitochondrial carrier (TC 2.A.29) family.

Its subcellular location is the mitochondrion inner membrane. May function as a mitochondrial transporter. This Trichophyton verrucosum (strain HKI 0517) protein is Putative mitochondrial carrier protein TRV_02148.2.